The sequence spans 542 residues: Chaperonin GroEL 3 (542 aa).

ATP-binding positions include 30 to 33, K51, 87 to 91, G415, and D496; these read TLGP and DGTTT.

This sequence belongs to the chaperonin (HSP60) family. As to quaternary structure, forms a cylinder of 14 subunits composed of two heptameric rings stacked back-to-back. Interacts with the co-chaperonin GroES.

The protein localises to the cytoplasm. The enzyme catalyses ATP + H2O + a folded polypeptide = ADP + phosphate + an unfolded polypeptide.. Functionally, together with its co-chaperonin GroES, plays an essential role in assisting protein folding. The GroEL-GroES system forms a nano-cage that allows encapsulation of the non-native substrate proteins and provides a physical environment optimized to promote and accelerate protein folding. This Rhizobium johnstonii (strain DSM 114642 / LMG 32736 / 3841) (Rhizobium leguminosarum bv. viciae) protein is Chaperonin GroEL 3.